The primary structure comprises 229 residues: Large ribosomal subunit protein uL1 (229 aa).

This sequence belongs to the universal ribosomal protein uL1 family. Part of the 50S ribosomal subunit.

Binds directly to 23S rRNA. The L1 stalk is quite mobile in the ribosome, and is involved in E site tRNA release. In terms of biological role, protein L1 is also a translational repressor protein, it controls the translation of the L11 operon by binding to its mRNA. This is Large ribosomal subunit protein uL1 from Bifidobacterium animalis subsp. lactis (strain AD011).